A 261-amino-acid chain; its full sequence is Indole-3-glycerol phosphate synthase (261 aa).

It belongs to the TrpC family.

It carries out the reaction 1-(2-carboxyphenylamino)-1-deoxy-D-ribulose 5-phosphate + H(+) = (1S,2R)-1-C-(indol-3-yl)glycerol 3-phosphate + CO2 + H2O. The protein operates within amino-acid biosynthesis; L-tryptophan biosynthesis; L-tryptophan from chorismate: step 4/5. The sequence is that of Indole-3-glycerol phosphate synthase from Burkholderia thailandensis (strain ATCC 700388 / DSM 13276 / CCUG 48851 / CIP 106301 / E264).